The chain runs to 485 residues: MTTLMVQGTTSDAGKSTLVTALCRWLARQGVAVAPFKPQNMALNSAVTADGGEIGRAQAVQAQACGLAPHTDMNPVLLKPDSDTGAQVIVHGRAVACMDAAAYHDYKRVAREAVLASHRRLAERYRVVMVEGAGSPAEINLRANDIANMGFAEAVDCPVILVADIDKGGVFAHLVGTLALLSASEQARVEGFVINRFRGDIALLEPGLDWLETHTGKPVLGVLPYLHDLHLEAEDAIDDRQPAKTGERLKVAVAVPPRISNHTDFDPLRLHPQVDLVFVGPGQRIPPADLIVLPGSKSVRSDLAFLREQGWEAAIRRHLRYGGKLLGICGGLQMLGGRIADPLGLEGAPGESRGLGLLDIDTVLEAEKQLRNVRGRLALEGAPVSGYEIHAGVSRGAGLDRPALGLDDGRCDGALSEDGQVLGTYLHGLFESPAACDALLRWAGLREVASPDYHALRERDIERLADLVEAHLDGARLRALCGLSG.

One can recognise a GATase cobBQ-type domain in the interval 248–435 (RLKVAVAVPP…LHGLFESPAA (188 aa)). The Nucleophile role is filled by Cys329. His427 is a catalytic residue.

Belongs to the CobB/CobQ family. CobQ subfamily.

Its pathway is cofactor biosynthesis; adenosylcobalamin biosynthesis. Its function is as follows. Catalyzes amidations at positions B, D, E, and G on adenosylcobyrinic A,C-diamide. NH(2) groups are provided by glutamine, and one molecule of ATP is hydrogenolyzed for each amidation. The protein is Cobyric acid synthase of Azotobacter vinelandii (strain DJ / ATCC BAA-1303).